The sequence spans 120 residues: Large ribosomal subunit protein uL18 (120 aa).

The protein belongs to the universal ribosomal protein uL18 family. In terms of assembly, part of the 50S ribosomal subunit; part of the 5S rRNA/L5/L18/L25 subcomplex. Contacts the 5S and 23S rRNAs.

Its function is as follows. This is one of the proteins that bind and probably mediate the attachment of the 5S RNA into the large ribosomal subunit, where it forms part of the central protuberance. The sequence is that of Large ribosomal subunit protein uL18 from Geobacillus sp. (strain WCH70).